We begin with the raw amino-acid sequence, 106 residues long: Large ribosomal subunit protein uL24 (106 aa).

The protein belongs to the universal ribosomal protein uL24 family. As to quaternary structure, part of the 50S ribosomal subunit.

One of two assembly initiator proteins, it binds directly to the 5'-end of the 23S rRNA, where it nucleates assembly of the 50S subunit. Functionally, one of the proteins that surrounds the polypeptide exit tunnel on the outside of the subunit. The sequence is that of Large ribosomal subunit protein uL24 from Dechloromonas aromatica (strain RCB).